A 229-amino-acid chain; its full sequence is RNA pyrophosphohydrolase (229 aa).

Residues 6-149 enclose the Nudix hydrolase domain; that stretch reads GFRPNVGIIL…KRGVYEMALT (144 aa). The Nudix box signature appears at 38–59; it reads GGIDRGETPEQAMFRELHEEVG. Residues 191 to 229 are disordered; that stretch reads KPGMELPPGASFDPDPQNSVPAPLEALPTLPVPKKPLDA. The span at 220 to 229 shows a compositional bias: pro residues; sequence LPVPKKPLDA.

The protein belongs to the Nudix hydrolase family. RppH subfamily. It depends on a divalent metal cation as a cofactor.

Functionally, accelerates the degradation of transcripts by removing pyrophosphate from the 5'-end of triphosphorylated RNA, leading to a more labile monophosphorylated state that can stimulate subsequent ribonuclease cleavage. The polypeptide is RNA pyrophosphohydrolase (Acidovorax ebreus (strain TPSY) (Diaphorobacter sp. (strain TPSY))).